The following is a 103-amino-acid chain: Histone H4 (103 aa).

Positions 1 to 14 (MSGRGKGGKGLGKG) are enriched in gly residues. The tract at residues 1 to 20 (MSGRGKGGKGLGKGGAKRHR) is disordered. S2 is subject to N-acetylserine. K6 and K13 each carry N6-acetyl-N6-methyllysine; alternate. The residue at position 17 (K17) is an N6-acetyllysine. A DNA-binding region spans residues 17–21 (KRHRK). Position 21 is an N6-methyllysine (K21).

The protein belongs to the histone H4 family. In terms of assembly, the nucleosome is a histone octamer containing two molecules each of H2A, H2B, H3 and H4 assembled in one H3-H4 heterotetramer and two H2A-H2B heterodimers. The octamer wraps approximately 147 bp of DNA.

The protein localises to the nucleus. It is found in the chromosome. In terms of biological role, core component of nucleosome. Nucleosomes wrap and compact DNA into chromatin, limiting DNA accessibility to the cellular machineries which require DNA as a template. Histones thereby play a central role in transcription regulation, DNA repair, DNA replication and chromosomal stability. DNA accessibility is regulated via a complex set of post-translational modifications of histones, also called histone code, and nucleosome remodeling. This chain is Histone H4 (H4DEKL), found in Dendronephthya klunzingeri (Klunzinger's soft coral).